The primary structure comprises 392 residues: UDP-N-acetylglucosamine--N-acetylmuramyl-(pentapeptide) pyrophosphoryl-undecaprenol N-acetylglucosamine transferase (392 aa).

Residues 14 to 16 (TGG), N124, R167, S195, I251, and Q296 each bind UDP-N-acetyl-alpha-D-glucosamine.

It belongs to the glycosyltransferase 28 family. MurG subfamily.

Its subcellular location is the cell inner membrane. It carries out the reaction di-trans,octa-cis-undecaprenyl diphospho-N-acetyl-alpha-D-muramoyl-L-alanyl-D-glutamyl-meso-2,6-diaminopimeloyl-D-alanyl-D-alanine + UDP-N-acetyl-alpha-D-glucosamine = di-trans,octa-cis-undecaprenyl diphospho-[N-acetyl-alpha-D-glucosaminyl-(1-&gt;4)]-N-acetyl-alpha-D-muramoyl-L-alanyl-D-glutamyl-meso-2,6-diaminopimeloyl-D-alanyl-D-alanine + UDP + H(+). Its pathway is cell wall biogenesis; peptidoglycan biosynthesis. Cell wall formation. Catalyzes the transfer of a GlcNAc subunit on undecaprenyl-pyrophosphoryl-MurNAc-pentapeptide (lipid intermediate I) to form undecaprenyl-pyrophosphoryl-MurNAc-(pentapeptide)GlcNAc (lipid intermediate II). In Sphingopyxis alaskensis (strain DSM 13593 / LMG 18877 / RB2256) (Sphingomonas alaskensis), this protein is UDP-N-acetylglucosamine--N-acetylmuramyl-(pentapeptide) pyrophosphoryl-undecaprenol N-acetylglucosamine transferase.